The primary structure comprises 338 residues: Formimidoylglutamase (338 aa).

Mn(2+)-binding residues include His137, Asp166, His168, Asp170, Cys259, and Asp261.

Belongs to the arginase family. Mn(2+) serves as cofactor.

It catalyses the reaction N-formimidoyl-L-glutamate + H2O = formamide + L-glutamate. The protein operates within amino-acid degradation; L-histidine degradation into L-glutamate; L-glutamate from N-formimidoyl-L-glutamate (hydrolase route): step 1/1. Functionally, catalyzes the conversion of N-formimidoyl-L-glutamate to L-glutamate and formamide. The protein is Formimidoylglutamase of Clostridium tetani (strain Massachusetts / E88).